The sequence spans 180 residues: Crossover junction endodeoxyribonuclease RuvC (180 aa).

Active-site residues include D7, E66, and D138. Residues D7, E66, and D138 each contribute to the Mg(2+) site.

This sequence belongs to the RuvC family. In terms of assembly, homodimer which binds Holliday junction (HJ) DNA. The HJ becomes 2-fold symmetrical on binding to RuvC with unstacked arms; it has a different conformation from HJ DNA in complex with RuvA. In the full resolvosome a probable DNA-RuvA(4)-RuvB(12)-RuvC(2) complex forms which resolves the HJ. The cofactor is Mg(2+).

Its subcellular location is the cytoplasm. The catalysed reaction is Endonucleolytic cleavage at a junction such as a reciprocal single-stranded crossover between two homologous DNA duplexes (Holliday junction).. In terms of biological role, the RuvA-RuvB-RuvC complex processes Holliday junction (HJ) DNA during genetic recombination and DNA repair. Endonuclease that resolves HJ intermediates. Cleaves cruciform DNA by making single-stranded nicks across the HJ at symmetrical positions within the homologous arms, yielding a 5'-phosphate and a 3'-hydroxyl group; requires a central core of homology in the junction. The consensus cleavage sequence is 5'-(A/T)TT(C/G)-3'. Cleavage occurs on the 3'-side of the TT dinucleotide at the point of strand exchange. HJ branch migration catalyzed by RuvA-RuvB allows RuvC to scan DNA until it finds its consensus sequence, where it cleaves and resolves the cruciform DNA. This chain is Crossover junction endodeoxyribonuclease RuvC, found in Burkholderia orbicola (strain MC0-3).